The following is a 93-amino-acid chain: Translation initiation factor IF-1 (93 aa).

The S1-like domain maps to 1 to 72 (MAKEELIQFE…EKGRLIFRHK (72 aa)). Residues 70-93 (RHKDERPGGGPPRGAPPRGQFRRR) are disordered.

The protein belongs to the IF-1 family. As to quaternary structure, component of the 30S ribosomal translation pre-initiation complex which assembles on the 30S ribosome in the order IF-2 and IF-3, IF-1 and N-formylmethionyl-tRNA(fMet); mRNA recruitment can occur at any time during PIC assembly.

Its subcellular location is the cytoplasm. One of the essential components for the initiation of protein synthesis. Stabilizes the binding of IF-2 and IF-3 on the 30S subunit to which N-formylmethionyl-tRNA(fMet) subsequently binds. Helps modulate mRNA selection, yielding the 30S pre-initiation complex (PIC). Upon addition of the 50S ribosomal subunit IF-1, IF-2 and IF-3 are released leaving the mature 70S translation initiation complex. This is Translation initiation factor IF-1 from Rhodopseudomonas palustris (strain BisB18).